Reading from the N-terminus, the 70-residue chain is Protein SlyX homolog (70 aa).

Belongs to the SlyX family.

This Shewanella sp. (strain MR-4) protein is Protein SlyX homolog.